The chain runs to 61 residues: MAVPKRKTSPSRRGMRRSADALKAPTYVEDKDSGELRRPHHIDLKTGMYRGRQVLKVKTEA.

Residues 1-16 (MAVPKRKTSPSRRGMR) are compositionally biased toward basic residues. The tract at residues 1 to 44 (MAVPKRKTSPSRRGMRRSADALKAPTYVEDKDSGELRRPHHIDL) is disordered. Residues 28–44 (VEDKDSGELRRPHHIDL) are compositionally biased toward basic and acidic residues.

It belongs to the bacterial ribosomal protein bL32 family.

The polypeptide is Large ribosomal subunit protein bL32 (Methylobacterium nodulans (strain LMG 21967 / CNCM I-2342 / ORS 2060)).